Reading from the N-terminus, the 78-residue chain is Conotoxin 1 (78 aa).

Positions 1 to 22 are cleaved as a signal peptide; it reads MKLTCMMFVAVLFLTASVFITA. Residues 23-51 constitute a propeptide that is removed on maturation; that stretch reads DDSRNGIENLPRMRRHEMKNPKASKLNKR. A Pyrrolidone carboxylic acid modification is found at Gln52. 3 cysteine pairs are disulfide-bonded: Cys53–Cys69, Cys60–Cys73, and Cys68–Cys77.

Belongs to the conotoxin O1 superfamily. In terms of tissue distribution, expressed by the venom duct.

It is found in the secreted. The polypeptide is Conotoxin 1 (Conus imperialis (Imperial cone)).